Consider the following 348-residue polypeptide: Type II methyltransferase M.BglI (348 aa).

It belongs to the N(4)/N(6)-methyltransferase family.

It catalyses the reaction a 2'-deoxycytidine in DNA + S-adenosyl-L-methionine = an N(4)-methyl-2'-deoxycytidine in DNA + S-adenosyl-L-homocysteine + H(+). In terms of biological role, a beta subtype methylase, recognizes the double-stranded sequence 5'-GCCNNNNNGGC-3', methylates C-2 on both strands, and protects the DNA from cleavage by the BglI endonuclease. The polypeptide is Type II methyltransferase M.BglI (bglIM) (Bacillus subtilis).